A 90-amino-acid chain; its full sequence is Cell division protein CrgA (90 aa).

The segment at 1–25 is disordered; it reads MPKARVTKNETAPVSSNPSANRTPV. Over residues 9-22 the composition is skewed to polar residues; sequence NETAPVSSNPSANR. 2 consecutive transmembrane segments (helical) span residues 38 to 58 and 67 to 87; these read VIMF…YLVG and LGAW…LMTM.

The protein belongs to the CrgA family.

The protein localises to the cell membrane. In terms of biological role, involved in cell division. This Corynebacterium glutamicum (strain ATCC 13032 / DSM 20300 / JCM 1318 / BCRC 11384 / CCUG 27702 / LMG 3730 / NBRC 12168 / NCIMB 10025 / NRRL B-2784 / 534) protein is Cell division protein CrgA.